Here is a 256-residue protein sequence, read N- to C-terminus: Lysosomal membrane ascorbate-dependent ferrireductase CYB561A3 (256 aa).

Over 1-3 (MAS) the chain is Cytoplasmic. A helical transmembrane segment spans residues 4 to 24 (GWFYMSCMVLGSLGSMCILFT). In terms of domain architecture, Cytochrome b561 spans 12 to 219 (VLGSLGSMCI…FGLLVLYILL (208 aa)). Topologically, residues 25–40 (TYWMQYWRGGFAWDGT) are lumenal. The chain crosses the membrane as a helical span at residues 41–61 (VLMFNWHPVLMVSGMVVLYGA). Heme b is bound by residues H47 and R67. The Cytoplasmic segment spans residues 62-83 (ASLVYRLPASWVGPKLPWKVLH). Residues K76 and K80 each contribute to the L-ascorbate site. H83 is a binding site for heme b. A helical transmembrane segment spans residues 84–104 (AALHLLAFTVTVVGLTAVFGF). The Lumenal segment spans residues 105 to 119 (HNHSKITHLYSLHSW). N106 carries N-linked (GlcNAc...) asparagine glycosylation. Residues 112 to 115 (HLYS) and H117 contribute to the heme b site. A helical transmembrane segment spans residues 120–140 (LGITTVALFACQWFLGFAVFL). The Cytoplasmic segment spans residues 141–154 (LPWASQWLRSLLKP). R149 serves as a coordination point for L-ascorbate. The chain crosses the membrane as a helical span at residues 155–175 (VHVFFGACILSLSIASVISGI). H156 and E177 together coordinate heme b. Residues 176–202 (NEKLFFVLKNATRPYSSLPGEAVFANS) are Lumenal-facing. A helical membrane pass occupies residues 203–223 (TGILVVSFGLLVLYILLASSW). R224 serves as a coordination point for heme b. Residues 224 to 256 (RRPDPGALTDRQVWLLVSHYRWDKAKKACFAPC) lie on the Cytoplasmic side of the membrane.

In terms of assembly, homodimer. Heme b serves as cofactor. N-glycosylated.

The protein localises to the late endosome membrane. It is found in the lysosome membrane. It carries out the reaction Fe(3+)(out) + L-ascorbate(in) = monodehydro-L-ascorbate radical(in) + Fe(2+)(out) + H(+). Functionally, transmembrane reductase that uses ascorbate as an electron donor in the cytoplasm and transfers electrons across membranes to reduce iron cations Fe(3+) into Fe(2+) in the lumen of the late endosome and lysosome. Reduced iron can then be extruded from the late endosome and lysosome to the cytoplasm by divalent metal-specific transporters. It is therefore most probably involved in endosomal and lysosomal cellular iron homeostasis. The polypeptide is Lysosomal membrane ascorbate-dependent ferrireductase CYB561A3 (Rattus norvegicus (Rat)).